The sequence spans 331 residues: Putative peptidyl-prolyl cis-trans isomerase RF_0616 (331 aa).

Residues 28–50 (NPTTIEQTASNNSSTDENQTSIN) form a disordered region. The PPIase FKBP-type domain occupies 128-226 (GHVVTVFYQI…NNEVKIYDDE (99 aa)).

The catalysed reaction is [protein]-peptidylproline (omega=180) = [protein]-peptidylproline (omega=0). In Rickettsia felis (strain ATCC VR-1525 / URRWXCal2) (Rickettsia azadi), this protein is Putative peptidyl-prolyl cis-trans isomerase RF_0616.